A 133-amino-acid chain; its full sequence is ATP synthase epsilon chain (133 aa).

The protein belongs to the ATPase epsilon chain family. As to quaternary structure, F-type ATPases have 2 components, CF(1) - the catalytic core - and CF(0) - the membrane proton channel. CF(1) has five subunits: alpha(3), beta(3), gamma(1), delta(1), epsilon(1). CF(0) has three main subunits: a, b and c.

The protein resides in the cell inner membrane. Functionally, produces ATP from ADP in the presence of a proton gradient across the membrane. The protein is ATP synthase epsilon chain of Maricaulis maris (strain MCS10) (Caulobacter maris).